The following is a 339-amino-acid chain: Annexin A2 (339 aa).

Residue serine 2 is modified to N-acetylserine. An S100A10-binding site region spans residues 2–24 (STVHEILCKLSLEGDHSTPPSAY). Tyrosine 24 carries the post-translational modification Phosphotyrosine; by SRC. Serine 26 bears the Phosphoserine; by PKC mark. Annexin repeat units follow at residues 33–104 (FDAE…GLLK) and 105–176 (TPAQ…ALAK). Lysine 49 is subject to N6-acetyllysine; alternate. Lysine 49 participates in a covalent cross-link: Glycyl lysine isopeptide (Lys-Gly) (interchain with G-Cter in SUMO1); alternate. Residue lysine 49 forms a Glycyl lysine isopeptide (Lys-Gly) (interchain with G-Cter in SUMO2); alternate linkage. Position 152 is an N6-acetyllysine (lysine 152). Residue serine 184 is modified to Phosphoserine. Annexin repeat units lie at residues 189–261 (ELID…NLVQ) and 265–336 (NKPL…YLCG). The residue at position 199 (tyrosine 199) is a Phosphotyrosine. An N6-acetyllysine modification is found at lysine 227.

Belongs to the annexin family. Heterotetramer containing 2 light chains of S100A10/p11 and 2 heavy chains of ANXA2/p36. Interacts with ATP1B1. Interacts with DYSF. Interacts with COCH. Interacts (via repeat Annexin 1) with PCSK9 (via the C-terminal domain); the interaction inhibits the degradation of LDLR. Interacts with CEACAM1 (via the cytoplasmic domain); this interaction is regulated by phosphorylation of CEACAM1. Interacts with APPL2 and APPL1; targets APPL2 to endosomes and acting in parallel to RAB5A. Interacts with S100A4. May interact with UBAP2. In terms of processing, ISGylated. Expressed strongly in velvet antler reserve mesenchyme.

The protein localises to the secreted. Its subcellular location is the extracellular space. The protein resides in the extracellular matrix. It is found in the basement membrane. Functionally, calcium-regulated membrane-binding protein whose affinity for calcium is greatly enhanced by anionic phospholipids. It binds two calcium ions with high affinity. May be involved in heat-stress response. Inhibits PCSK9-enhanced LDLR degradation, probably reduces PCSK9 protein levels via a translational mechanism but also competes with LDLR for binding with PCSK9. Binds to endosomes damaged by phagocytosis of particulate wear debris and participates in endosomal membrane stabilization, thereby limiting NLRP3 inflammasome activation. Required for endothelial cell surface plasmin generation and may support fibrinolytic surveillance and neoangiogenesis. The polypeptide is Annexin A2 (ANXA2) (Cervus elaphus (Red deer)).